We begin with the raw amino-acid sequence, 218 residues long: 3-dehydroquinate dehydratase (218 aa).

3-dehydroquinate is bound by residues 29 to 31 (EFR) and arginine 56. Histidine 116 functions as the Proton donor/acceptor in the catalytic mechanism. The active-site Schiff-base intermediate with substrate is lysine 142. 3-dehydroquinate contacts are provided by arginine 180, serine 200, and glutamine 204.

The protein belongs to the type-I 3-dehydroquinase family. As to quaternary structure, homodimer.

The enzyme catalyses 3-dehydroquinate = 3-dehydroshikimate + H2O. The protein operates within metabolic intermediate biosynthesis; chorismate biosynthesis; chorismate from D-erythrose 4-phosphate and phosphoenolpyruvate: step 3/7. Its function is as follows. Involved in the third step of the chorismate pathway, which leads to the biosynthesis of aromatic amino acids. Catalyzes the cis-dehydration of 3-dehydroquinate (DHQ) and introduces the first double bond of the aromatic ring to yield 3-dehydroshikimate. This chain is 3-dehydroquinate dehydratase, found in Methanococcus maripaludis (strain DSM 14266 / JCM 13030 / NBRC 101832 / S2 / LL).